Consider the following 832-residue polypeptide: Cadherin-like protein 26 (832 aa).

The N-terminal stretch at 1–27 (MAMRSGRHPSLLLLLVLLLWLLQVSII) is a signal peptide. Topologically, residues 28–614 (DSVQQETDDL…ELADAEVGLH (587 aa)) are extracellular. 4 consecutive Cadherin domains span residues 35–165 (DDLT…APQF), 166–275 (PEKE…RPAF), 276–396 (TQEN…PPAF), and 397–500 (HPQS…VPTL). Residues Asn-81, Asn-85, Asn-171, and Asn-177 are each glycosylated (N-linked (GlcNAc...) asparagine). The N-linked (GlcNAc...) asparagine glycan is linked to Asn-462. A helical transmembrane segment spans residues 615–635 (VGALFPVCAAFVALAVALLFL). Over 636–832 (LRCYFVLEPK…EIYSESGVPS (197 aa)) the chain is Cytoplasmic. A disordered region spans residues 813 to 832 (SLGSKATPFEEIYSESGVPS).

As to quaternary structure, homodimer. Component of a cadherin:catenin adhesion complex composed of at least of CDH26, beta-catenin/CTNNB1, alpha-catenin/CTNNA1 and p120 catenin/CTNND1. In terms of processing, N-glycosylated. In terms of tissue distribution, expressed by epithelial cells of gastrointestinal tissue.

Its subcellular location is the cell membrane. In terms of biological role, cadherins are calcium-dependent cell adhesion proteins. They preferentially interact with themselves in a homophilic manner in connecting cells; cadherins may thus contribute to the sorting of heterogeneous cell types. Ligand for integrins alpha-E/beta-7, ITGAE:ITGAB7, alpha-4/beta-7, ITGA4:ITGAB7 and alpha-4/beta-1, ITGA4:ITGAB1 through which modulates CD4(+) T cells activation. The protein is Cadherin-like protein 26 (CDH26) of Homo sapiens (Human).